We begin with the raw amino-acid sequence, 221 residues long: uncharacterized protein (221 aa).

A compositionally biased stretch (basic and acidic residues) spans 1–16; the sequence is MESSRWDKDPPGERRP. Residues 1–64 are disordered; it reads MESSRWDKDP…SHTPQTNTRR (64 aa).

This is an uncharacterized protein from Homo sapiens (Human).